Consider the following 376-residue polypeptide: Queuine tRNA-ribosyltransferase (376 aa).

D93 (proton acceptor) is an active-site residue. Substrate-binding positions include 93–97, D147, Q190, and G217; that span reads DSGGF. An RNA binding region spans residues 248-254; that stretch reads GVGKPDD. The Nucleophile role is filled by D267. Zn(2+) contacts are provided by C305, C307, C310, and H336.

Belongs to the queuine tRNA-ribosyltransferase family. Homodimer. Within each dimer, one monomer is responsible for RNA recognition and catalysis, while the other monomer binds to the replacement base PreQ1. The cofactor is Zn(2+).

The catalysed reaction is 7-aminomethyl-7-carbaguanine + guanosine(34) in tRNA = 7-aminomethyl-7-carbaguanosine(34) in tRNA + guanine. It participates in tRNA modification; tRNA-queuosine biosynthesis. Catalyzes the base-exchange of a guanine (G) residue with the queuine precursor 7-aminomethyl-7-deazaguanine (PreQ1) at position 34 (anticodon wobble position) in tRNAs with GU(N) anticodons (tRNA-Asp, -Asn, -His and -Tyr). Catalysis occurs through a double-displacement mechanism. The nucleophile active site attacks the C1' of nucleotide 34 to detach the guanine base from the RNA, forming a covalent enzyme-RNA intermediate. The proton acceptor active site deprotonates the incoming PreQ1, allowing a nucleophilic attack on the C1' of the ribose to form the product. After dissociation, two additional enzymatic reactions on the tRNA convert PreQ1 to queuine (Q), resulting in the hypermodified nucleoside queuosine (7-(((4,5-cis-dihydroxy-2-cyclopenten-1-yl)amino)methyl)-7-deazaguanosine). This chain is Queuine tRNA-ribosyltransferase, found in Ruegeria sp. (strain TM1040) (Silicibacter sp.).